The following is an 85-amino-acid chain: Kunitz-type serine protease inhibitor homolog beta-bungarotoxin BF B1 chain (85 aa).

An N-terminal signal peptide occupies residues 1–24; sequence MSSGGLLLLLGLLTLWTELTPVSS. The BPTI/Kunitz inhibitor domain maps to 31-81; that stretch reads CDKPPDTGRCRKNVRAFYYKPSAKRCVQFIYGGCNANGNHFKSDHLCRCEC. Cystine bridges form between Cys31–Cys81, Cys40–Cys64, and Cys56–Cys77.

It belongs to the venom Kunitz-type family. As to quaternary structure, heterodimer; disulfide-linked. The A chains have phospholipase A2 activity and the B chains show homology with the basic protease inhibitors. Expressed by the venom gland.

Its subcellular location is the secreted. Beta-1-bungarotoxin is a presynaptic neurotoxin of the venom. The B chain is homologous to venom basic protease inhibitors but has no protease inhibitor activity and blocks voltage-gated potassium channels (Kv). This Bungarus fasciatus (Banded krait) protein is Kunitz-type serine protease inhibitor homolog beta-bungarotoxin BF B1 chain.